Here is a 232-residue protein sequence, read N- to C-terminus: dTTP/UTP pyrophosphatase (232 aa).

D103 functions as the Proton acceptor in the catalytic mechanism.

It belongs to the Maf family. YhdE subfamily. The cofactor is a divalent metal cation.

It is found in the cytoplasm. The enzyme catalyses dTTP + H2O = dTMP + diphosphate + H(+). The catalysed reaction is UTP + H2O = UMP + diphosphate + H(+). It carries out the reaction 5-methyl-UTP + H2O = 5-methyl-UMP + diphosphate + H(+). It catalyses the reaction psi-UTP + H2O = psi-UMP + diphosphate + H(+). Its function is as follows. Nucleoside triphosphate pyrophosphatase that hydrolyzes dTTP and UTP. Can also hydrolyze the modified nucleotides 5-methyl-UTP (m(5)UTP) and pseudo-UTP. Has weak activity with CTP. May have a dual role in cell division arrest and in preventing the incorporation of modified nucleotides into cellular nucleic acids. The sequence is that of dTTP/UTP pyrophosphatase from Saccharomyces cerevisiae (strain ATCC 204508 / S288c) (Baker's yeast).